A 658-amino-acid polypeptide reads, in one-letter code: Non-reducing end beta-L-arabinofuranosidase (658 aa).

Residues His142, 192–194 (DGH), His270, and Glu322 each bind beta-L-arabinofuranose. Catalysis depends on Glu322, which acts as the Proton donor/acceptor. Positions 338, 340, 417, and 418 each coordinate Zn(2+). Cys417 functions as the Nucleophile; S-glycosyl-cysteine intermediate in the catalytic mechanism.

Belongs to the glycosyl hydrolase 127 family. In terms of assembly, homodimer in solution. Requires Zn(2+) as cofactor.

The catalysed reaction is beta-L-arabinofuranosyl-(1-&gt;2)-beta-L-arabinofuranose + H2O = 2 beta-L-arabinofuranose. Strongly inhibited in the presence of thiol modifiers, suggesting a crucial role for cysteine residues in catalysis. Slightly inhibited by EDTA. Its function is as follows. Beta-L-arabinofuranosidase that removes the beta-L-arabinofuranose residue from the non-reducing end of various substrates, including beta-L-arabinofuranosyl-hydroxyproline (Ara-Hyp), Ara-beta-1,2-Ara-beta-Hyp (Ara(2)-Hyp), Ara-beta-1,2-Ara-beta-1,2-Ara-beta-Hyp (Ara(3)-Hyp), and beta-L-arabinofuranosyl-(1-&gt;2)-1-O-methyl-beta-L-arabinofuranose. In the presence of 1-alkanols, shows transglycosylation activity, retaining the anomeric configuration of the arabinofuranose residue. The polypeptide is Non-reducing end beta-L-arabinofuranosidase (Bifidobacterium longum subsp. longum (strain ATCC 15707 / DSM 20219 / JCM 1217 / NCTC 11818 / E194b)).